We begin with the raw amino-acid sequence, 274 residues long: ATP synthase subunit a (274 aa).

The next 5 membrane-spanning stretches (helical) occupy residues 44 to 64, 110 to 130, 142 to 164, 212 to 232, and 243 to 263; these read VDSM…FYMV, FIWV…FPFI, IVPS…LILF, LFGN…LLPW, and AIFH…LTIV.

The protein belongs to the ATPase A chain family. F-type ATPases have 2 components, CF(1) - the catalytic core - and CF(0) - the membrane proton channel. CF(1) has five subunits: alpha(3), beta(3), gamma(1), delta(1), epsilon(1). CF(0) has three main subunits: a(1), b(2) and c(9-12). The alpha and beta chains form an alternating ring which encloses part of the gamma chain. CF(1) is attached to CF(0) by a central stalk formed by the gamma and epsilon chains, while a peripheral stalk is formed by the delta and b chains.

The protein localises to the cell membrane. Key component of the proton channel; it plays a direct role in the translocation of protons across the membrane. This chain is ATP synthase subunit a, found in Buchnera aphidicola subsp. Acyrthosiphon pisum (strain APS) (Acyrthosiphon pisum symbiotic bacterium).